A 214-amino-acid chain; its full sequence is ATP phosphoribosyltransferase (214 aa).

This sequence belongs to the ATP phosphoribosyltransferase family. Short subfamily. As to quaternary structure, heteromultimer composed of HisG and HisZ subunits.

Its subcellular location is the cytoplasm. It carries out the reaction 1-(5-phospho-beta-D-ribosyl)-ATP + diphosphate = 5-phospho-alpha-D-ribose 1-diphosphate + ATP. The protein operates within amino-acid biosynthesis; L-histidine biosynthesis; L-histidine from 5-phospho-alpha-D-ribose 1-diphosphate: step 1/9. Its function is as follows. Catalyzes the condensation of ATP and 5-phosphoribose 1-diphosphate to form N'-(5'-phosphoribosyl)-ATP (PR-ATP). Has a crucial role in the pathway because the rate of histidine biosynthesis seems to be controlled primarily by regulation of HisG enzymatic activity. In Deinococcus deserti (strain DSM 17065 / CIP 109153 / LMG 22923 / VCD115), this protein is ATP phosphoribosyltransferase.